The chain runs to 86 residues: Exodeoxyribonuclease 7 small subunit (86 aa).

The tract at residues 1-26 (MQDELFETEKAPQKNTKNAKNAPKKS) is disordered.

It belongs to the XseB family. Heterooligomer composed of large and small subunits.

Its subcellular location is the cytoplasm. It catalyses the reaction Exonucleolytic cleavage in either 5'- to 3'- or 3'- to 5'-direction to yield nucleoside 5'-phosphates.. Functionally, bidirectionally degrades single-stranded DNA into large acid-insoluble oligonucleotides, which are then degraded further into small acid-soluble oligonucleotides. In Helicobacter pylori (strain Shi470), this protein is Exodeoxyribonuclease 7 small subunit.